Reading from the N-terminus, the 144-residue chain is Cytochrome c oxidase subunit 4 isoform 1, mitochondrial (144 aa).

Topologically, residues Ser-1–Asn-73 are mitochondrial matrix. Lys-4 is subject to N6-acetyllysine; alternate. Position 4 is an N6-succinyllysine; alternate (Lys-4). Lys-28 carries the N6-acetyllysine modification. A phosphoserine mark is found at Ser-31 and Ser-33. Lys-35 bears the N6-acetyllysine; alternate mark. Lys-35 carries the N6-succinyllysine; alternate modification. Lys-42 bears the N6-acetyllysine mark. Residues Glu-74 to Tyr-99 form a helical membrane-spanning segment. Over Val-100–Lys-144 the chain is Mitochondrial intermembrane.

Belongs to the cytochrome c oxidase IV family. As to quaternary structure, component of the cytochrome c oxidase (complex IV, CIV), a multisubunit enzyme composed of 14 subunits. The complex is composed of a catalytic core of 3 subunits MT-CO1, MT-CO2 and MT-CO3, encoded in the mitochondrial DNA, and 11 supernumerary subunits COX4I, COX5A, COX5B, COX6A, COX6B, COX6C, COX7A, COX7B, COX7C, COX8 and NDUFA4, which are encoded in the nuclear genome. The complex exists as a monomer or a dimer and forms supercomplexes (SCs) in the inner mitochondrial membrane with NADH-ubiquinone oxidoreductase (complex I, CI) and ubiquinol-cytochrome c oxidoreductase (cytochrome b-c1 complex, complex III, CIII), resulting in different assemblies (supercomplex SCI(1)III(2)IV(1) and megacomplex MCI(2)III(2)IV(2)). Interacts with PHB2; the interaction decreases in absence of SPHK2. Interacts with AFG1L. Interacts with ABCB7; this interaction allows the regulation of cellular iron homeostasis and cellular reactive oxygen species (ROS) levels in cardiomyocytes. Interacts with FLVCR2; this interaction occurs in the absence of heme and is disrupted upon heme binding. Interacts with IRGC.

The protein resides in the mitochondrion inner membrane. The protein operates within energy metabolism; oxidative phosphorylation. Functionally, component of the cytochrome c oxidase, the last enzyme in the mitochondrial electron transport chain which drives oxidative phosphorylation. The respiratory chain contains 3 multisubunit complexes succinate dehydrogenase (complex II, CII), ubiquinol-cytochrome c oxidoreductase (cytochrome b-c1 complex, complex III, CIII) and cytochrome c oxidase (complex IV, CIV), that cooperate to transfer electrons derived from NADH and succinate to molecular oxygen, creating an electrochemical gradient over the inner membrane that drives transmembrane transport and the ATP synthase. Cytochrome c oxidase is the component of the respiratory chain that catalyzes the reduction of oxygen to water. Electrons originating from reduced cytochrome c in the intermembrane space (IMS) are transferred via the dinuclear copper A center (CU(A)) of subunit 2 and heme A of subunit 1 to the active site in subunit 1, a binuclear center (BNC) formed by heme A3 and copper B (CU(B)). The BNC reduces molecular oxygen to 2 water molecules using 4 electrons from cytochrome c in the IMS and 4 protons from the mitochondrial matrix. This is Cytochrome c oxidase subunit 4 isoform 1, mitochondrial (COX4I1) from Gorilla gorilla gorilla (Western lowland gorilla).